A 103-amino-acid chain; its full sequence is Large ribosomal subunit protein uL24 (103 aa).

It belongs to the universal ribosomal protein uL24 family. Part of the 50S ribosomal subunit.

Its function is as follows. One of two assembly initiator proteins, it binds directly to the 5'-end of the 23S rRNA, where it nucleates assembly of the 50S subunit. One of the proteins that surrounds the polypeptide exit tunnel on the outside of the subunit. The sequence is that of Large ribosomal subunit protein uL24 from Alkaliphilus metalliredigens (strain QYMF).